Reading from the N-terminus, the 389-residue chain is Alanine racemase (389 aa).

Lys-48 acts as the Proton acceptor; specific for D-alanine in catalysis. An N6-(pyridoxal phosphate)lysine modification is found at Lys-48. Residue Arg-144 coordinates substrate. Tyr-281 (proton acceptor; specific for L-alanine) is an active-site residue. Substrate is bound at residue Met-329.

Belongs to the alanine racemase family. The cofactor is pyridoxal 5'-phosphate.

The catalysed reaction is L-alanine = D-alanine. Its pathway is amino-acid biosynthesis; D-alanine biosynthesis; D-alanine from L-alanine: step 1/1. Its function is as follows. Catalyzes the interconversion of L-alanine and D-alanine. May also act on other amino acids. In Leptospira interrogans serogroup Icterohaemorrhagiae serovar Lai (strain 56601), this protein is Alanine racemase (alr).